A 379-amino-acid chain; its full sequence is Galactose-1-phosphate uridylyltransferase (379 aa).

A compositionally biased stretch (basic and acidic residues) spans 1–10 (MSHSGADPEQ). A disordered region spans residues 1–20 (MSHSGADPEQRQQASEADAM). Cys-75 is a binding site for Zn(2+). UDP-alpha-D-glucose-binding positions include Ala-81, 97–98 (ND), and Asn-173. His-184 is a binding site for Zn(2+). His-186 functions as the Tele-UMP-histidine intermediate in the catalytic mechanism. Gln-188 lines the UDP-alpha-D-glucose pocket. Zn(2+) contacts are provided by Glu-202, His-301, His-319, and His-321. UDP-alpha-D-glucose contacts are provided by residues 334-337 (KFMV) and 339-340 (YE).

It belongs to the galactose-1-phosphate uridylyltransferase type 1 family. In terms of assembly, homodimer. Requires Zn(2+) as cofactor.

The catalysed reaction is alpha-D-galactose 1-phosphate + UDP-alpha-D-glucose = alpha-D-glucose 1-phosphate + UDP-alpha-D-galactose. The protein operates within carbohydrate metabolism; galactose metabolism. Functionally, plays an important role in galactose metabolism. This is Galactose-1-phosphate uridylyltransferase (Galt) from Mus musculus (Mouse).